A 211-amino-acid polypeptide reads, in one-letter code: V-type ATP synthase subunit D (211 aa).

Belongs to the V-ATPase D subunit family.

Produces ATP from ADP in the presence of a proton gradient across the membrane. In Fusobacterium nucleatum subsp. nucleatum (strain ATCC 25586 / DSM 15643 / BCRC 10681 / CIP 101130 / JCM 8532 / KCTC 2640 / LMG 13131 / VPI 4355), this protein is V-type ATP synthase subunit D.